A 642-amino-acid chain; its full sequence is Mini-chromosome maintenance complex-binding protein (642 aa).

Residues 151–161 (ARVSPSTSYTP) are compositionally biased toward polar residues. A disordered region spans residues 151–197 (ARVSPSTSYTPSRHKRSYEDDDDMDLQPNKQKDQHAGARQAGSVGGL). Phosphoserine is present on serine 154. The residue at position 160 (threonine 160) is a Phosphothreonine. Serine 167 and serine 298 each carry phosphoserine.

This sequence belongs to the MCMBP family. Interacts with the MCM complex: associates with the MCM3-7 complex which lacks MCM2, while it does not interact with the MCM complex when MCM2 is present (MCM2-7 complex). Interacts with the RPA complex, when composed of all RPA1, RPA2 and RPA3 components, but not with RPA1 or RPA2 alone.

It localises to the nucleus. Its function is as follows. Associated component of the MCM complex that acts as a regulator of DNA replication. Binds to the MCM complex during late S phase and promotes the disassembly of the MCM complex from chromatin, thereby acting as a key regulator of pre-replication complex (pre-RC) unloading from replicated DNA. Can dissociate the MCM complex without addition of ATP; probably acts by destabilizing interactions of each individual subunits of the MCM complex. Required for sister chromatid cohesion. The chain is Mini-chromosome maintenance complex-binding protein (MCMBP) from Homo sapiens (Human).